The primary structure comprises 547 residues: Putative cysteine ligase BshC (547 aa).

Residues 461-504 adopt a coiled-coil conformation; sequence ASTEATRSAIMDEMEALKQKVVRAEKRQQDEVRAQLKKAHTNLR.

This sequence belongs to the BshC family.

The sequence is that of Putative cysteine ligase BshC from Salinibacter ruber (strain DSM 13855 / M31).